Consider the following 323-residue polypeptide: Large ribosomal subunit protein uL10x (323 aa).

A disordered region spans residues 287–323 (DAGGGSAQAGAAAKVEEKKEESDEEDYEGGFGLFDEE). S308 is modified (phosphoserine). Residues 308 to 323 (SDEEDYEGGFGLFDEE) show a composition bias toward acidic residues. Y313 carries the phosphotyrosine modification.

It belongs to the universal ribosomal protein uL10 family. As to quaternary structure, P0 forms a pentameric complex by interaction with dimers of P1 and P2.

In terms of biological role, ribosomal protein P0 is the functional equivalent of E.coli protein L10. The protein is Large ribosomal subunit protein uL10x (RPP0C) of Arabidopsis thaliana (Mouse-ear cress).